Consider the following 450-residue polypeptide: Nicotinamide phosphoribosyltransferase (450 aa).

Arg-210 serves as a coordination point for diphosphate. Asp-233 is a beta-nicotinamide D-ribonucleotide binding site. Diphosphate-binding residues include His-249 and Arg-310. Residues 310 to 312 (RAD), 364 to 365 (GD), and Arg-403 each bind beta-nicotinamide D-ribonucleotide.

It belongs to the NAPRTase family.

It carries out the reaction beta-nicotinamide D-ribonucleotide + diphosphate = 5-phospho-alpha-D-ribose 1-diphosphate + nicotinamide + H(+). The protein operates within cofactor biosynthesis; NAD(+) biosynthesis; nicotinamide D-ribonucleotide from 5-phospho-alpha-D-ribose 1-diphosphate and nicotinamide: step 1/1. Its function is as follows. Catalyzes the condensation of nicotinamide with 5-phosphoribosyl-1-pyrophosphate to yield nicotinamide mononucleotide, an intermediate in the biosynthesis of NAD. This chain is Nicotinamide phosphoribosyltransferase, found in Mycoplasma genitalium (strain ATCC 33530 / DSM 19775 / NCTC 10195 / G37) (Mycoplasmoides genitalium).